Reading from the N-terminus, the 645-residue chain is MNTGDVPATVTLESVNSVTFTQDTDGNIILHCPQNDGEDLGSDETTEPVHKRIRLSSEDGEDPQDSASTEYSVVTLPITDGDESFEVTMTATEMRDEELESDDLSETTGKDSSAQKKGEDVSAVSQAWFTTKEDKDTLVNKGHKWKQGMWSKEEIDLLMTNIELYLKNRGIQDPAEIIFEMSKEERKDFYRSIACGLNRPLFAVYRRVLRMYDNRNHVGKYTDEEINKLKELRQKHGNDWATIGSALGRSASSVKDRCRLMKDTCNTGKWTEEEERRLAEVVHELTGTEAGDVVTQGVSWASVAELVGTRSEKQCRSKWLNYLNWKQSGGTEWTKEDDINLVRRIAELEVEDENEINWDILASGWSSVRSPQWLRSKWWTIKRQVANHKELPFPVLLKGLQDVVEAPPSTMNKVVVVGSRSANASPSPVTALQIPVQIPVQITHVSSSDGSSGTSDSETITLNSGALQTFELLPSFHLQPTGTPGTYFLQTGTNQSLPLTLSANPTVTLTAAASPSSPDQIILHSLTTDTENVTVQMSHPGIIIQTVTSEDLADPLGQSELEGEQVLVKEEPSENQTNPAIEEPSEEQSKQGEKTLDSSKVVETVLMVPSPGSFIPTNEDISSDSVLPLGTLTDPILENQEEGSN.

Disordered regions lie at residues 34 to 71 and 95 to 119; these read QNDG…STEY and RDEE…KKGE. 2 stretches are compositionally biased toward acidic residues: residues 36–46 and 95–105; these read DGEDLGSDETT and RDEELESDDLS. One can recognise a Myb-like 1 domain in the interval 219-257; the sequence is GKYTDEEINKLKELRQKHGNDWATIGSALGRSASSVKDR. The region spanning 262 to 327 is the HTH myb-type domain; sequence KDTCNTGKWT…KWLNYLNWKQ (66 aa). A DNA-binding region (H-T-H motif) is located at residues 300–323; that stretch reads WASVAELVGTRSEKQCRSKWLNYL. One can recognise a Myb-like 2 domain in the interval 333–382; sequence WTKEDDINLVRRIAELEVEDENEINWDILASGWSSVRSPQWLRSKWWTIK. Residues 568–645 form a disordered region; sequence VKEEPSENQT…ILENQEEGSN (78 aa). Over residues 587–597 the composition is skewed to basic and acidic residues; the sequence is EQSKQGEKTLD. The segment covering 615–625 has biased composition (polar residues); that stretch reads IPTNEDISSDS.

Belongs to the DMTF1 family.

Its subcellular location is the nucleus. Transcriptional activator which activates the CDKN2A/ARF locus in response to Ras-Raf signaling, thereby promoting p53/TP53-dependent growth arrest. Binds to the consensus sequence 5'-CCCG[GT]ATGT-3'. The sequence is that of Cyclin-D-binding Myb-like transcription factor 1 (dmtf1) from Danio rerio (Zebrafish).